Consider the following 371-residue polypeptide: T-cell acute lymphocytic leukemia protein 1 (371 aa).

The interval methionine 1–glycine 71 is disordered. A compositionally biased stretch (basic and acidic residues) spans glycine 34–aspartate 57. Residues valine 204 to leucine 256 form the bHLH domain. The disordered stretch occupies residues glutamine 263 to arginine 371. Positions histidine 293–isoleucine 305 are enriched in basic and acidic residues. The segment covering glycine 321–aspartate 335 has biased composition (acidic residues).

As to expression, expressed in the main hemopoietic organs in adults, namely the kidney and the spleen. Also expressed in the liver, brain, gill and gonads.

The protein resides in the nucleus. In terms of biological role, transcription factor that plays a pivotal role in hemopoietic and endothelial development. This Takifugu rubripes (Japanese pufferfish) protein is T-cell acute lymphocytic leukemia protein 1.